Here is a 193-residue protein sequence, read N- to C-terminus: Rho-related GTP-binding protein RhoA-D (193 aa).

GTP contacts are provided by residues Gly12–Thr19, Phe30–Thr37, Asp59–Gln63, Asn117–Asp120, and Ser160–Lys162. (Microbial infection) O-linked (GlcNAc) tyrosine; by Yersinia Afp18 glycosylation is present at Tyr34. Cysteine methyl ester is present on Cys190. Cys190 is lipidated: S-geranylgeranyl cysteine. The propeptide at Leu191–Leu193 is removed in mature form.

The protein belongs to the small GTPase superfamily. Rho family. Post-translationally, (Microbial infection) Glycosylated at Tyr-34 by Yersinia ruckeri toxin Afp18. Mono-O-GlcNAcylation by Afp18 inhibits RhoA activation by guanine nucleotide exchange factors and blocks RhoA signaling.

It localises to the cell membrane. In terms of biological role, regulates a signal transduction pathway linking plasma membrane receptors to the assembly of focal adhesions and actin stress fibers. The chain is Rho-related GTP-binding protein RhoA-D from Danio rerio (Zebrafish).